The primary structure comprises 192 residues: MIDDLIQKEFLAHKEALEKSLESLQEALKQSVHLLIETLENQGKILICGNGGSASDAQHFATELTGRYKLERKGLSAISLNTDTSALTAIANDYGYEEVFARQVEALGVKNDVLIGISTSGNSKNVLKAYEKAKDLGMKTLSLAGRDGGKMKPLSDMALIVPSDDTPRIQEMHILMIHILCDCIERHFAHKN.

Residues L35–N192 enclose the SIS domain. Residue N50–G52 coordinates substrate. Zn(2+) is bound by residues H59 and E63. Residues E63, N92–D93, S118–S120, S123, and Q170 each bind substrate. The Zn(2+) site is built by Q170 and H178.

The protein belongs to the SIS family. GmhA subfamily. In terms of assembly, homotetramer. Zn(2+) serves as cofactor.

It is found in the cytoplasm. The catalysed reaction is 2 D-sedoheptulose 7-phosphate = D-glycero-alpha-D-manno-heptose 7-phosphate + D-glycero-beta-D-manno-heptose 7-phosphate. It participates in carbohydrate biosynthesis; D-glycero-D-manno-heptose 7-phosphate biosynthesis; D-glycero-alpha-D-manno-heptose 7-phosphate and D-glycero-beta-D-manno-heptose 7-phosphate from sedoheptulose 7-phosphate: step 1/1. Catalyzes the isomerization of sedoheptulose 7-phosphate in D-glycero-D-manno-heptose 7-phosphate. The sequence is that of Phosphoheptose isomerase from Helicobacter pylori (strain HPAG1).